The following is a 255-amino-acid chain: Acetylglutamate kinase (255 aa).

Substrate is bound by residues 40 to 41 (GG), Arg-62, and Asn-153.

This sequence belongs to the acetylglutamate kinase family. ArgB subfamily.

Its subcellular location is the cytoplasm. The catalysed reaction is N-acetyl-L-glutamate + ATP = N-acetyl-L-glutamyl 5-phosphate + ADP. Its pathway is amino-acid biosynthesis; L-arginine biosynthesis; N(2)-acetyl-L-ornithine from L-glutamate: step 2/4. In terms of biological role, catalyzes the ATP-dependent phosphorylation of N-acetyl-L-glutamate. This Bacillus cereus (strain AH820) protein is Acetylglutamate kinase.